Reading from the N-terminus, the 883-residue chain is Alanine--tRNA ligase (883 aa).

Zn(2+)-binding residues include His-560, His-564, Cys-665, and His-669.

Belongs to the class-II aminoacyl-tRNA synthetase family. Zn(2+) is required as a cofactor.

It localises to the cytoplasm. It carries out the reaction tRNA(Ala) + L-alanine + ATP = L-alanyl-tRNA(Ala) + AMP + diphosphate. Functionally, catalyzes the attachment of alanine to tRNA(Ala) in a two-step reaction: alanine is first activated by ATP to form Ala-AMP and then transferred to the acceptor end of tRNA(Ala). Also edits incorrectly charged Ser-tRNA(Ala) and Gly-tRNA(Ala) via its editing domain. This chain is Alanine--tRNA ligase, found in Mesomycoplasma hyopneumoniae (strain J / ATCC 25934 / NCTC 10110) (Mycoplasma hyopneumoniae).